Consider the following 128-residue polypeptide: Large ribosomal subunit protein bL17 (128 aa).

The protein belongs to the bacterial ribosomal protein bL17 family. Part of the 50S ribosomal subunit. Contacts protein L32.

The sequence is that of Large ribosomal subunit protein bL17 from Petrotoga mobilis (strain DSM 10674 / SJ95).